An 855-amino-acid chain; its full sequence is DNA mismatch repair protein MutS (855 aa).

An ATP-binding site is contributed by 616-623 (GPNMGGKS).

The protein belongs to the DNA mismatch repair MutS family.

Functionally, this protein is involved in the repair of mismatches in DNA. It is possible that it carries out the mismatch recognition step. This protein has a weak ATPase activity. This Escherichia coli O139:H28 (strain E24377A / ETEC) protein is DNA mismatch repair protein MutS.